Consider the following 105-residue polypeptide: Large ribosomal subunit protein uL24 (105 aa).

The protein belongs to the universal ribosomal protein uL24 family. As to quaternary structure, part of the 50S ribosomal subunit.

Functionally, one of two assembly initiator proteins, it binds directly to the 5'-end of the 23S rRNA, where it nucleates assembly of the 50S subunit. One of the proteins that surrounds the polypeptide exit tunnel on the outside of the subunit. This Mycolicibacterium vanbaalenii (strain DSM 7251 / JCM 13017 / BCRC 16820 / KCTC 9966 / NRRL B-24157 / PYR-1) (Mycobacterium vanbaalenii) protein is Large ribosomal subunit protein uL24.